The sequence spans 90 residues: Sec-independent protein translocase protein TatA (90 aa).

The helical transmembrane segment at 1–21 (MGSMSIWHWVIVAVIVMLLFG) threads the bilayer. A disordered region spans residues 44-90 (AEDETPPAVQAAPPPAEPVRTIPHATETSPGTAIPASHLPGGERKPV).

The protein belongs to the TatA/E family. The Tat system comprises two distinct complexes: a TatABC complex, containing multiple copies of TatA, TatB and TatC subunits, and a separate TatA complex, containing only TatA subunits. Substrates initially bind to the TatABC complex, which probably triggers association of the separate TatA complex to form the active translocon.

Its subcellular location is the cell inner membrane. Part of the twin-arginine translocation (Tat) system that transports large folded proteins containing a characteristic twin-arginine motif in their signal peptide across membranes. TatA could form the protein-conducting channel of the Tat system. The chain is Sec-independent protein translocase protein TatA from Methylobacterium radiotolerans (strain ATCC 27329 / DSM 1819 / JCM 2831 / NBRC 15690 / NCIMB 10815 / 0-1).